The following is a 520-amino-acid chain: RNA polymerase sigma factor sigA (520 aa).

A chloroplast-targeting transit peptide spans 1–66 (MTATPAVIGL…APATPKLTAV (66 aa)). Residues 37-49 (GGGGGGGGGGGGD) are compositionally biased toward gly residues. Disordered regions lie at residues 37 to 57 (GGGGGGGGGGGGDAMSFAPPA), 87 to 117 (HHSSAAAALAPPPPPPPPPTPSPASRAAHAH), and 171 to 190 (SVSARQRRMSGRRRGRTKNG). The segment covering 96 to 108 (APPPPPPPPPTPS) has biased composition (pro residues). Basic residues predominate over residues 175–187 (RQRRMSGRRRGRT). The Polymerase core binding motif lies at 305 to 318 (DLIQGGLIGLLRGI). Positions 479–498 (WEDISRQFGLSRERVRQVGL) form a DNA-binding region, H-T-H motif.

This sequence belongs to the sigma-70 factor family. As to expression, expressed in shoots. Expressed in the tips of fully elongated leaves. Expressed in leaf blades.

The protein resides in the plastid. The protein localises to the chloroplast. In terms of biological role, sigma factors are initiation factors that promote the attachment of plastid-encoded RNA polymerase (PEP) to specific initiation sites and are then released. Controls the transcription of the psaA and psaB genes in chloroplast, and thus maintains the abundance of the core protein complex PsaA-PsaB of photosystem I (PSI) in the thylakoid membrane. Maintains PSI activity, sufficient rate of electron transfer from PSII to PSI, and photochemical efficiency. This chain is RNA polymerase sigma factor sigA, found in Oryza sativa subsp. japonica (Rice).